Here is a 340-residue protein sequence, read N- to C-terminus: uncharacterized protein (340 aa).

2 helical membrane passes run 162–182 (PLVPLVAGPLPVAFFIGVLAG) and 239–259 (FWISLYFPLTMRSLCNAIVVP).

It localises to the cell membrane. This is an uncharacterized protein from Mycobacterium bovis (strain ATCC BAA-935 / AF2122/97).